The sequence spans 255 residues: 4-hydroxy-tetrahydrodipicolinate reductase (255 aa).

NAD(+) contacts are provided by residues 8 to 13 (GASGRM), 89 to 91 (GTT), and 114 to 117 (SSNY). His146 acts as the Proton donor/acceptor in catalysis. His147 contributes to the (S)-2,3,4,5-tetrahydrodipicolinate binding site. Residue Lys150 is the Proton donor of the active site. (S)-2,3,4,5-tetrahydrodipicolinate is bound at residue 156 to 157 (GT).

It belongs to the DapB family.

The protein resides in the cytoplasm. It catalyses the reaction (S)-2,3,4,5-tetrahydrodipicolinate + NAD(+) + H2O = (2S,4S)-4-hydroxy-2,3,4,5-tetrahydrodipicolinate + NADH + H(+). The catalysed reaction is (S)-2,3,4,5-tetrahydrodipicolinate + NADP(+) + H2O = (2S,4S)-4-hydroxy-2,3,4,5-tetrahydrodipicolinate + NADPH + H(+). It functions in the pathway amino-acid biosynthesis; L-lysine biosynthesis via DAP pathway; (S)-tetrahydrodipicolinate from L-aspartate: step 4/4. Its function is as follows. Catalyzes the conversion of 4-hydroxy-tetrahydrodipicolinate (HTPA) to tetrahydrodipicolinate. The protein is 4-hydroxy-tetrahydrodipicolinate reductase of Methanoregula boonei (strain DSM 21154 / JCM 14090 / 6A8).